The primary structure comprises 384 residues: ATP phosphoribosyltransferase regulatory subunit (384 aa).

It belongs to the class-II aminoacyl-tRNA synthetase family. HisZ subfamily. Heteromultimer composed of HisG and HisZ subunits.

It is found in the cytoplasm. Its pathway is amino-acid biosynthesis; L-histidine biosynthesis; L-histidine from 5-phospho-alpha-D-ribose 1-diphosphate: step 1/9. Functionally, required for the first step of histidine biosynthesis. May allow the feedback regulation of ATP phosphoribosyltransferase activity by histidine. The protein is ATP phosphoribosyltransferase regulatory subunit of Paracidovorax citrulli (strain AAC00-1) (Acidovorax citrulli).